Consider the following 539-residue polypeptide: Alpha-aminoadipic semialdehyde dehydrogenase (539 aa).

A mitochondrion-targeting transit peptide spans 1 to 26 (MWRVPGLLCVRVARKSKFSGSWNRPA). Lys94 carries the post-translational modification N6-acetyllysine; alternate. Lys94 bears the N6-succinyllysine; alternate mark. NAD(+) is bound by residues 192–194 (TAF), Lys218, 258–259 (GT), 274–275 (GS), 274–279 (GSTQVG), and 296–297 (EL). Glu296 functions as the Proton acceptor in the catalytic mechanism. Cys330 acts as the Nucleophile in catalysis. Thr331 lines the (S)-2-amino-6-oxohexanoate pocket. Residue Glu427 participates in NAD(+) binding. An N6-acetyllysine modification is found at Lys462. The (S)-2-amino-6-oxohexanoate site is built by Gly489 and Ala490. Lys500 bears the N6-acetyllysine mark. Lys537 bears the N6-succinyllysine mark.

It belongs to the aldehyde dehydrogenase family. In terms of assembly, homotetramer.

Its subcellular location is the cytoplasm. The protein resides in the cytosol. It is found in the nucleus. It localises to the mitochondrion. The catalysed reaction is nonanal + NAD(+) + H2O = nonanoate + NADH + 2 H(+). The enzyme catalyses (S)-2-amino-6-oxohexanoate + NAD(+) + H2O = L-2-aminoadipate + NADH + 2 H(+). It catalyses the reaction betaine aldehyde + NAD(+) + H2O = glycine betaine + NADH + 2 H(+). It carries out the reaction an aldehyde + NAD(+) + H2O = a carboxylate + NADH + 2 H(+). The catalysed reaction is hexanal + NAD(+) + H2O = hexanoate + NADH + 2 H(+). The enzyme catalyses octanal + NAD(+) + H2O = octanoate + NADH + 2 H(+). It catalyses the reaction (E)-non-2-enal + NAD(+) + H2O = (E)-non-2-enoate + NADH + 2 H(+). It carries out the reaction (E)-4-hydroxynon-2-enal + NAD(+) + H2O = (E)-4-hydroxynon-2-enoate + NADH + 2 H(+). It participates in amine and polyamine biosynthesis; betaine biosynthesis via choline pathway; betaine from betaine aldehyde: step 1/1. Functionally, multifunctional enzyme mediating important protective effects. Metabolizes betaine aldehyde to betaine, an important cellular osmolyte and methyl donor. Protects cells from oxidative stress by metabolizing a number of lipid peroxidation-derived aldehydes. Involved in lysine catabolism. In Bos taurus (Bovine), this protein is Alpha-aminoadipic semialdehyde dehydrogenase (ALDH7A1).